The primary structure comprises 274 residues: D-aminoacyl-tRNA deacylase (274 aa).

This sequence belongs to the DtdA deacylase family. As to quaternary structure, monomer. Zn(2+) serves as cofactor.

It catalyses the reaction a D-aminoacyl-tRNA + H2O = a tRNA + a D-alpha-amino acid + H(+). The catalysed reaction is glycyl-tRNA(Ala) + H2O = tRNA(Ala) + glycine + H(+). In terms of biological role, D-aminoacyl-tRNA deacylase with broad substrate specificity. By recycling D-aminoacyl-tRNA to D-amino acids and free tRNA molecules, this enzyme counteracts the toxicity associated with the formation of D-aminoacyl-tRNA entities in vivo. This Pyrococcus horikoshii (strain ATCC 700860 / DSM 12428 / JCM 9974 / NBRC 100139 / OT-3) protein is D-aminoacyl-tRNA deacylase.